Here is a 173-residue protein sequence, read N- to C-terminus: Co-chaperone protein HscB homolog (173 aa).

Residues 5–77 (CHFALFELQP…PKRARYLLAM (73 aa)) form the J domain.

It belongs to the HscB family. As to quaternary structure, interacts with HscA and stimulates its ATPase activity.

Co-chaperone involved in the maturation of iron-sulfur cluster-containing proteins. Seems to help targeting proteins to be folded toward HscA. This Pseudomonas fluorescens (strain SBW25) protein is Co-chaperone protein HscB homolog.